Here is a 108-residue protein sequence, read N- to C-terminus: Thiosulfate sulfurtransferase GlpE (108 aa).

The Rhodanese domain maps to 17 to 105 (KDGSAALVDI…WARQYPQDVE (89 aa)). C65 acts as the Cysteine persulfide intermediate in catalysis.

The protein belongs to the GlpE family.

It localises to the cytoplasm. The enzyme catalyses thiosulfate + hydrogen cyanide = thiocyanate + sulfite + 2 H(+). It carries out the reaction thiosulfate + [thioredoxin]-dithiol = [thioredoxin]-disulfide + hydrogen sulfide + sulfite + 2 H(+). Functionally, transferase that catalyzes the transfer of sulfur from thiosulfate to thiophilic acceptors such as cyanide or dithiols. May function in a CysM-independent thiosulfate assimilation pathway by catalyzing the conversion of thiosulfate to sulfite, which can then be used for L-cysteine biosynthesis. The protein is Thiosulfate sulfurtransferase GlpE of Serratia proteamaculans (strain 568).